The following is a 506-amino-acid chain: ATP synthase subunit alpha, mitochondrial (506 aa).

171–178 (GDRQTGKT) contacts ATP.

Belongs to the ATPase alpha/beta chains family. In terms of assembly, F-type ATPases have 2 components, CF(1) - the catalytic core - and CF(0) - the membrane proton channel. CF(1) has five subunits: alpha(3), beta(3), gamma(1), delta(1), epsilon(1). CF(0) has three main subunits: a, b and c.

It localises to the mitochondrion. The protein resides in the mitochondrion inner membrane. Its function is as follows. Mitochondrial membrane ATP synthase (F(1)F(0) ATP synthase or Complex V) produces ATP from ADP in the presence of a proton gradient across the membrane which is generated by electron transport complexes of the respiratory chain. F-type ATPases consist of two structural domains, F(1) - containing the extramembraneous catalytic core, and F(0) - containing the membrane proton channel, linked together by a central stalk and a peripheral stalk. During catalysis, ATP synthesis in the catalytic domain of F(1) is coupled via a rotary mechanism of the central stalk subunits to proton translocation. Subunits alpha and beta form the catalytic core in F(1). Rotation of the central stalk against the surrounding alpha(3)beta(3) subunits leads to hydrolysis of ATP in three separate catalytic sites on the beta subunits. Subunit alpha does not bear the catalytic high-affinity ATP-binding sites. The polypeptide is ATP synthase subunit alpha, mitochondrial (ATPA) (Beta vulgaris (Sugar beet)).